The chain runs to 1361 residues: Zinc finger protein GLI4 (1361 aa).

Residues 185-270 form a disordered region; the sequence is SSFGHTPLLH…PQPPDHLTDL (86 aa). Composition is skewed to polar residues over residues 198 to 208 and 227 to 241; these read TFASRQQGALT and NKVSSESAVSSTVNQ. C2H2-type zinc fingers lie at residues 289–314, 322–349, 355–379, 385–410, and 416–441; these read TNCHWDGCSKEFDTQDQLVHHINNDH, FVCRWQDCSREQKPFKAQYMLVVHMRRH, HKCTFEGCFKAYSRLENLKTHLRSH, YVCDHEGCNKAFSNASDRAKHQNRTH, and YICKVPGCTKRYTDPSSLRKHVKTVH. Disordered stretches follow at residues 434–527, 556–584, 647–720, 787–832, 906–946, and 1134–1230; these read RKHV…TNNI, STVSSWQRSGRPATPETQRIHSAETGTAE, NERR…LPNL, NAGL…SMNS, QNRE…APGA, and DGLH…PKDN. A compositionally biased stretch (basic and acidic residues) spans 475–502; it reads SGREHSDSVSRDQEHCLQTRTIKTEDNM. Low complexity predominate over residues 506–522; sequence SSPGGQSSCSSEPSPYG. Over residues 573 to 584 the composition is skewed to basic and acidic residues; it reads QRIHSAETGTAE. The segment covering 653-670 has biased composition (low complexity); the sequence is TSSTLSSAYTSRRSSGIS. 2 stretches are compositionally biased toward polar residues: residues 672–695 and 710–720; these read YFSSRRSSETSQFGGRLNNSSSAD and EASQHSGLPNL. A compositionally biased stretch (basic and acidic residues) spans 805–821; it reads RASDPVRRTAGIDDKPL. Composition is skewed to polar residues over residues 913–939 and 1142–1164; these read QNLQTEYSSPARNLQSNTKSFHNNTPE and YTVQPQKNGLEPQQNTLGMSGQA. The span at 1172-1183 shows a compositional bias: pro residues; it reads PRPPAAPHPPNR.

The protein belongs to the GLI C2H2-type zinc-finger protein family.

The protein localises to the nucleus. Has an essential role in the early embryonic patterning of mesoderm and neuroectoderm. In Xenopus laevis (African clawed frog), this protein is Zinc finger protein GLI4 (gli4).